The primary structure comprises 223 residues: Glutathione-specific gamma-glutamylcyclotransferase 1 (223 aa).

Residues 1–26 (MKQESASQSTPPPSLSPAPSSAQPSW) form a disordered region. 36-41 (IFGYGS) lines the substrate pocket. Glu-116 (proton acceptor) is an active-site residue.

Belongs to the gamma-glutamylcyclotransferase family. ChaC subfamily. Interacts with NOTCH1 (via extracellular region). In terms of tissue distribution, widely expressed, with high expression in forebrain and anterior spinal cord. Expressed at intermediate level in the dorsal aorta and heart. Present throughout adult brain (at protein level).

It is found in the cytoplasm. The protein localises to the cytosol. It localises to the golgi apparatus. Its subcellular location is the trans-Golgi network. It carries out the reaction glutathione = L-cysteinylglycine + 5-oxo-L-proline. In terms of biological role, catalyzes the cleavage of glutathione into 5-oxo-L-proline and a Cys-Gly dipeptide. Acts specifically on glutathione, but not on other gamma-glutamyl peptides. Glutathione depletion is an important factor for apoptosis initiation and execution. Acts as a pro-apoptotic component of the unfolded protein response pathway by mediating the pro-apoptotic effects of the ATF4-ATF3-DDIT3/CHOP cascade. Negative regulator of Notch signaling pathway involved in embryonic neurogenesis: acts by inhibiting Notch cleavage by furin, maintaining Notch in an immature inactive form, thereby promoting neurogenesis in embryos. This is Glutathione-specific gamma-glutamylcyclotransferase 1 from Mus musculus (Mouse).